A 299-amino-acid polypeptide reads, in one-letter code: Cathepsin B-like CP3 (299 aa).

An N-terminal signal peptide occupies residues 1–19 (MKLFLLAAAAFSAPALTVS). 3 cysteine pairs are disulfide-bonded: Cys87–Cys114, Cys97–Cys140, and Cys133–Cys176. Cys100 is an active-site residue. Residues His244 and Asn265 contribute to the active site.

Belongs to the peptidase C1 family.

It localises to the vacuole. Thiol protease which is required for parasite excystation and invasion of the proximal small intestine of the human host. The polypeptide is Cathepsin B-like CP3 (CP3) (Giardia intestinalis (Giardia lamblia)).